We begin with the raw amino-acid sequence, 125 residues long: MVRTKADSAGSSASSGSYRKAVAARAPRKTFGSSSSGSNHVTSPTGKKSESKYAGGNPVCVRPTPTWQKGIGEFFGSPSTSQPEKENRIPSDDEEAGGSGAGKAPRKSRPLPPDPSEEAADSDDE.

The segment at 1 to 125 (MVRTKADSAG…SEEAADSDDE (125 aa)) is disordered. The span at 8–17 (SAGSSASSGS) shows a compositional bias: low complexity. The D-box signature appears at 28 to 39 (RKTFGSSSSGSN). The PIP-box signature appears at 68–79 (QKGIGEFFGSPS). Positions 85–87 (KEN) match the KEN box motif. Residues 95–107 (EAGGSGAGKAPRK) carry the Initiation motif motif. Acidic residues predominate over residues 115–125 (PSEEAADSDDE).

In terms of assembly, interacts with pcna.

The protein localises to the nucleus. It localises to the cytoplasm. The protein resides in the perinuclear region. Functionally, PCNA-binding protein that acts as a regulator of DNA repair during DNA replication. Following DNA damage, the interaction with pcna is disrupted, facilitating the interaction between monoubiquitinated pcna and the translesion DNA synthesis DNA polymerase eta (polh) at stalled replisomes, facilitating the bypass of replication-fork-blocking lesions. Also acts as a regulator of centrosome number. The chain is PCNA-associated factor from Xenopus tropicalis (Western clawed frog).